The following is a 305-amino-acid chain: Maximins-S type B/C (305 aa).

The first 18 residues, 1-18 (MNFNYFILVLFFITSGHA), serve as a signal peptide directing secretion. 2 consecutive propeptides follow at residues 19 to 35 (KSETREVHQEAENHIKR) and 52 to 65 (SAEEQNLAEHLVTR). Asn83 is modified (asparagine amide). The propeptide occupies 87–100 (SAEEQDLAEHLVTR). At Asn118 the chain carries Asparagine amide. Residues 122 to 135 (SAEEQDLAEDLVTR) constitute a propeptide that is removed on maturation. Residue Lys153 is modified to Lysine amide. Residues 157 to 170 (SAEDQDLAEDLVTR) constitute a propeptide that is removed on maturation. Asn188 is subject to Asparagine amide. A propeptide spanning residues 192 to 205 (SAEEQDLAEHLVTR) is cleaved from the precursor. Asn223 is modified (asparagine amide). The propeptide occupies 227–240 (SAEEQDLSEDLVTR). Asn258 carries the asparagine amide modification. The propeptide occupies 262–275 (SAEEQDLVEDLVTR). Lys293 is subject to Lysine amide. A propeptide spanning residues 297–305 (SAEQEKDMK) is cleaved from the precursor.

It belongs to the maximin-S family. As to expression, expressed by the skin dorsal glands.

The protein resides in the secreted. Maximin-S1 has no antimicrobial activity. Has no hemolytic activity. Functionally, maximin-S2 has an activity against mycoplasma but has no activity against common Gram-positive and Gram-negative bacteria nor fungi. Has no hemolytic activity. In terms of biological role, maximin-S3 has an activity against mycoplasma but has no activity against common Gram-positive and Gram-negative bacteria nor fungi. Has no hemolytic activity. Its function is as follows. Maximin-S4 has an activity against mycoplasma but has no activity against common Gram-positive and Gram-negative bacteria nor fungi. Has no hemolytic activity. Maximin-S5 has an activity against mycoplasma but has no activity against common Gram-positive and Gram-negative bacteria nor fungi. Has no hemolytic activity. This is Maximins-S type B/C from Bombina maxima (Giant fire-bellied toad).